Here is a 217-residue protein sequence, read N- to C-terminus: Cytochrome c biogenesis ATP-binding export protein CcmA (217 aa).

One can recognise an ABC transporter domain in the interval 6-215 (FSAKNLACVR…HLDQFAVAEE (210 aa)). ATP is bound at residue 38 to 45 (GPNGSGKS).

It belongs to the ABC transporter superfamily. CcmA exporter (TC 3.A.1.107) family. In terms of assembly, the complex is composed of two ATP-binding proteins (CcmA) and two transmembrane proteins (CcmB).

Its subcellular location is the cell inner membrane. The catalysed reaction is heme b(in) + ATP + H2O = heme b(out) + ADP + phosphate + H(+). In terms of biological role, part of the ABC transporter complex CcmAB involved in the biogenesis of c-type cytochromes; once thought to export heme, this seems not to be the case, but its exact role is uncertain. Responsible for energy coupling to the transport system. The chain is Cytochrome c biogenesis ATP-binding export protein CcmA from Paramagnetospirillum magneticum (strain ATCC 700264 / AMB-1) (Magnetospirillum magneticum).